Reading from the N-terminus, the 327-residue chain is Phenylalanine--tRNA ligase alpha subunit (327 aa).

Glu252 serves as a coordination point for Mg(2+).

It belongs to the class-II aminoacyl-tRNA synthetase family. Phe-tRNA synthetase alpha subunit type 1 subfamily. In terms of assembly, tetramer of two alpha and two beta subunits. Mg(2+) is required as a cofactor.

Its subcellular location is the cytoplasm. It catalyses the reaction tRNA(Phe) + L-phenylalanine + ATP = L-phenylalanyl-tRNA(Phe) + AMP + diphosphate + H(+). This Haemophilus ducreyi (strain 35000HP / ATCC 700724) protein is Phenylalanine--tRNA ligase alpha subunit.